The following is a 292-amino-acid chain: uncharacterized protein (292 aa).

5 consecutive transmembrane segments (helical) span residues 57 to 77 (IISL…LTLI), 101 to 121 (VYVF…FNFM), 143 to 163 (LIYA…AVLI), 184 to 204 (VVIT…NFVL), and 271 to 291 (IAFL…DRGI).

This sequence belongs to the CbiQ family.

The protein localises to the cell membrane. This is an uncharacterized protein from Methanocaldococcus jannaschii (strain ATCC 43067 / DSM 2661 / JAL-1 / JCM 10045 / NBRC 100440) (Methanococcus jannaschii).